A 162-amino-acid chain; its full sequence is Small ribosomal subunit protein uS5 (162 aa).

The S5 DRBM domain occupies 11–74 (LTDRVVHISR…EQAKKNLIKV (64 aa)).

It belongs to the universal ribosomal protein uS5 family. Part of the 30S ribosomal subunit. Contacts proteins S4 and S8.

With S4 and S12 plays an important role in translational accuracy. Functionally, located at the back of the 30S subunit body where it stabilizes the conformation of the head with respect to the body. This chain is Small ribosomal subunit protein uS5, found in Pelobacter propionicus (strain DSM 2379 / NBRC 103807 / OttBd1).